The chain runs to 727 residues: Probable glutamate carboxypeptidase ARB_02390 (727 aa).

Residues 1–18 form the signal peptide; sequence MIVKSLSLLALAAATVEG. N-linked (GlcNAc...) asparagine glycosylation is found at asparagine 60 and asparagine 80. The 139-residue stretch at 158–296 folds into the PA domain; the sequence is ATAEYVYVGR…ISQLDAQPIL (139 aa). Position 197 (arginine 197) interacts with substrate. Asparagine 223 carries an N-linked (GlcNAc...) asparagine glycan. The interval 255-279 is disordered; sequence FPGDPTTPGYPSRPDSPRKDKSPVV. Ca(2+) is bound by residues threonine 261 and tyrosine 264. The tract at residues 266 to 565 is NAALADase; the sequence is SRPDSPRKDK…QFLGLLGYHL (300 aa). Asparagine 310, asparagine 319, and asparagine 353 each carry an N-linked (GlcNAc...) asparagine glycan. Histidine 366 provides a ligand contact to Zn(2+). Residue glutamate 414 is the For NAALADase activity of the active site. Glutamate 415 is a binding site for Zn(2+). Ca(2+)-binding residues include glutamate 423 and glutamate 426. Aspartate 443 contributes to the Zn(2+) binding site. Residues 516–518 and tyrosine 530 each bind substrate; that span reads TGA. Histidine 531 contacts Zn(2+). Serine 604 serves as the catalytic Charge relay system. N-linked (GlcNAc...) asparagine glycosylation occurs at asparagine 614. Histidine 665 functions as the Charge relay system in the catalytic mechanism. 675–676 is a binding site for substrate; it reads GY. Residue asparagine 692 is glycosylated (N-linked (GlcNAc...) asparagine).

It belongs to the peptidase M28 family. M28B subfamily. Zn(2+) is required as a cofactor.

The protein localises to the secreted. The enzyme catalyses Release of an unsubstituted, C-terminal glutamyl residue, typically from Ac-Asp-Glu or folylpoly-gamma-glutamates.. Has both folate hydrolase and N-acetylated-alpha-linked-acidic dipeptidase (NAALADase) activity. Also exhibits a dipeptidyl-peptidase IV type activity. This Arthroderma benhamiae (strain ATCC MYA-4681 / CBS 112371) (Trichophyton mentagrophytes) protein is Probable glutamate carboxypeptidase ARB_02390.